The chain runs to 428 residues: MDARATIPEHIARTVILPQGYADDEVIYPAFKWLRDEQPLAMAHIEGYDPMWIATKHADVMQIGKQPGLFSNAEGSEILYDQNNEAFMRSISGGCPHVIDSLTSMDPPTHTAYRGLTLNWFQPASIRKLEENIRRIAQASVQRLLDFDGECDFMTDCALYYPLHVVMTALGVPEDDEPLMLKLTQDFFGVHEPDEQAVAAPRQSADEAARRFHETIATFYDYFNGFTVDRRSCPKDDVMSLLANSKLDGNYIDDKYINAYYVAIATAGHDTTSSSSGGAIIGLSRNPEQLALAKSDPALIPRLVDEAVRWTAPVKSFMRTALADTEVRGQNIKRGDRIMLSYPSANRDEEVFSNPDEFDITRFPNRHLGFGWGAHMCLGQHLAKLEMKIFFEELLPKLKSVELSGPPRLVATNFVGGPKNVPIRFTKA.

Residue cysteine 377 coordinates heme.

It belongs to the cytochrome P450 family. The cofactor is heme.

It is found in the cytoplasm. Catalyzes the hydroxylation of alpha-terpineol. The sequence is that of Cytochrome P450-terp (cyp108) from Pseudomonas sp.